The chain runs to 282 residues: Bifunctional protein FolD (282 aa).

NADP(+) is bound by residues 166 to 168 and isoleucine 232; that span reads GAS.

The protein belongs to the tetrahydrofolate dehydrogenase/cyclohydrolase family. As to quaternary structure, homodimer.

The enzyme catalyses (6R)-5,10-methylene-5,6,7,8-tetrahydrofolate + NADP(+) = (6R)-5,10-methenyltetrahydrofolate + NADPH. It catalyses the reaction (6R)-5,10-methenyltetrahydrofolate + H2O = (6R)-10-formyltetrahydrofolate + H(+). The protein operates within one-carbon metabolism; tetrahydrofolate interconversion. Functionally, catalyzes the oxidation of 5,10-methylenetetrahydrofolate to 5,10-methenyltetrahydrofolate and then the hydrolysis of 5,10-methenyltetrahydrofolate to 10-formyltetrahydrofolate. The protein is Bifunctional protein FolD of Histophilus somni (strain 129Pt) (Haemophilus somnus).